Reading from the N-terminus, the 97-residue chain is Co-chaperonin GroES (97 aa).

This sequence belongs to the GroES chaperonin family. As to quaternary structure, heptamer of 7 subunits arranged in a ring. Interacts with the chaperonin GroEL.

Its subcellular location is the cytoplasm. Functionally, together with the chaperonin GroEL, plays an essential role in assisting protein folding. The GroEL-GroES system forms a nano-cage that allows encapsulation of the non-native substrate proteins and provides a physical environment optimized to promote and accelerate protein folding. GroES binds to the apical surface of the GroEL ring, thereby capping the opening of the GroEL channel. The sequence is that of Co-chaperonin GroES from Pseudomonas fluorescens (strain Pf0-1).